The sequence spans 88 residues: Small ribosomal subunit protein uS15 (88 aa).

The protein belongs to the universal ribosomal protein uS15 family. As to quaternary structure, part of the 30S ribosomal subunit. Forms a bridge to the 50S subunit in the 70S ribosome, contacting the 23S rRNA.

Functionally, one of the primary rRNA binding proteins, it binds directly to 16S rRNA where it helps nucleate assembly of the platform of the 30S subunit by binding and bridging several RNA helices of the 16S rRNA. Forms an intersubunit bridge (bridge B4) with the 23S rRNA of the 50S subunit in the ribosome. The protein is Small ribosomal subunit protein uS15 of Geotalea daltonii (strain DSM 22248 / JCM 15807 / FRC-32) (Geobacter daltonii).